A 463-amino-acid polypeptide reads, in one-letter code: Ribosomal protein uS12 methylthiotransferase RimO (463 aa).

The disordered stretch occupies residues methionine 1–arginine 26. Residues proline 8 to proline 19 are compositionally biased toward low complexity. The 111-residue stretch at proline 30 to proline 140 folds into the MTTase N-terminal domain. The [4Fe-4S] cluster site is built by cysteine 39, cysteine 75, cysteine 104, cysteine 171, cysteine 175, and cysteine 178. The 239-residue stretch at leucine 157–alanine 395 folds into the Radical SAM core domain. The 66-residue stretch at alanine 398 to leucine 463 folds into the TRAM domain.

This sequence belongs to the methylthiotransferase family. RimO subfamily. Requires [4Fe-4S] cluster as cofactor.

The protein resides in the cytoplasm. It catalyses the reaction L-aspartate(89)-[ribosomal protein uS12]-hydrogen + (sulfur carrier)-SH + AH2 + 2 S-adenosyl-L-methionine = 3-methylsulfanyl-L-aspartate(89)-[ribosomal protein uS12]-hydrogen + (sulfur carrier)-H + 5'-deoxyadenosine + L-methionine + A + S-adenosyl-L-homocysteine + 2 H(+). Catalyzes the methylthiolation of an aspartic acid residue of ribosomal protein uS12. The protein is Ribosomal protein uS12 methylthiotransferase RimO of Paracoccus denitrificans (strain Pd 1222).